Consider the following 411-residue polypeptide: Chorismate synthase (411 aa).

NADP(+) contacts are provided by Arg40 and Arg46. FMN is bound by residues 135–137 and 256–257; these read RAS and QA. Residues 278-299 are disordered; it reads HDGIARGADGRPRRTSDRAGGI. Positions 285 to 294 are enriched in basic and acidic residues; it reads ADGRPRRTSD. FMN-binding positions include Ala301, 316 to 320, and Arg342; that span reads KPIAT.

Belongs to the chorismate synthase family. Homotetramer. The cofactor is FMNH2.

It carries out the reaction 5-O-(1-carboxyvinyl)-3-phosphoshikimate = chorismate + phosphate. Its pathway is metabolic intermediate biosynthesis; chorismate biosynthesis; chorismate from D-erythrose 4-phosphate and phosphoenolpyruvate: step 7/7. Catalyzes the anti-1,4-elimination of the C-3 phosphate and the C-6 proR hydrogen from 5-enolpyruvylshikimate-3-phosphate (EPSP) to yield chorismate, which is the branch point compound that serves as the starting substrate for the three terminal pathways of aromatic amino acid biosynthesis. This reaction introduces a second double bond into the aromatic ring system. The protein is Chorismate synthase of Micrococcus luteus (strain ATCC 4698 / DSM 20030 / JCM 1464 / CCM 169 / CCUG 5858 / IAM 1056 / NBRC 3333 / NCIMB 9278 / NCTC 2665 / VKM Ac-2230) (Micrococcus lysodeikticus).